The chain runs to 953 residues: Probable isoleucine--tRNA ligase, cytoplasmic (953 aa).

A 'HIGH' region motif is present at residues 45 to 55; the sequence is PFATGLPHYGH. The 'KMSKS' region motif lies at 634-638; the sequence is KMSKR. ATP is bound at residue K637.

The protein belongs to the class-I aminoacyl-tRNA synthetase family.

The protein localises to the cytoplasm. It catalyses the reaction tRNA(Ile) + L-isoleucine + ATP = L-isoleucyl-tRNA(Ile) + AMP + diphosphate. The chain is Probable isoleucine--tRNA ligase, cytoplasmic from Enterocytozoon bieneusi (strain H348) (Microsporidian parasite).